The chain runs to 150 residues: UPF0506 protein SJCHGC03144 (150 aa).

A signal peptide spans 1-18 (MNTCIQLLILCLVTVINS). N-linked (GlcNAc...) asparagine glycans are attached at residues N20, N36, N52, and N110. Cystine bridges form between C116-C130, C123-C134, and C129-C139.

The protein belongs to the UPF0506 family.

Its subcellular location is the secreted. In Schistosoma japonicum (Blood fluke), this protein is UPF0506 protein SJCHGC03144.